A 600-amino-acid polypeptide reads, in one-letter code: PWWP domain-containing protein 2B (600 aa).

Disordered stretches follow at residues 81–115 (ETGP…PVPA), 143–171 (WVPQ…LILS), 186–350 (KSTV…LGDG), 366–408 (GCPR…PQGK), and 426–477 (DCTS…TVPP). A compositionally biased stretch (pro residues) spans 104–115 (EPPPPLIPPVPA). The segment covering 151-160 (TIKRTRRRLS) has biased composition (basic residues). The segment covering 187–200 (STVSPQEASPSPLN) has biased composition (polar residues). Residues Ser190 and Ser210 each carry the phosphoserine modification. Positions 239 to 252 (EKREEDRVAGERVP) are enriched in basic and acidic residues. A Phosphoserine modification is found at Ser254. Residues 286-297 (PQQSLQNGSQDS) show a composition bias toward polar residues. Residues 298-309 (EVSRDVEPRGGG) show a composition bias toward basic and acidic residues. The segment covering 328-339 (PVPPISDLPPPK) has biased composition (pro residues). Low complexity predominate over residues 381–395 (DGSSHGLEDLSSGSS). Residues 443 to 456 (SSGSEVTSPDTGDL) show a composition bias toward polar residues. Ser457 is subject to Phosphoserine. The segment covering 457 to 468 (SSGDSASVPSSS) has biased composition (low complexity). Residues 500–560 (VGDIVWGKIH…ISKLSPFSEF (61 aa)) enclose the PWWP domain.

In terms of assembly, component of a MTA1-specific subcomplex of the NuRD complex composed of PWWP2B, MTA1 and HDAC1 but does not contain CHD4 and MBD3. Interacts with MTA1, MTA2, MTA3, HDAC1, HDAC2, RBBP4, RBBP7, BRCC3 and ZNF516. Does not interact with CHD4 and MBD3. Post-translationally, deubiquitinated by BRCC3; leading to its stabilization. As to expression, expressed in the brown adipose tissue.

The protein resides in the nucleus. In terms of biological role, chromatin-binding protein that acts as an adapter between distinct nucleosome components (H3K36me3 or H2A.Z) and chromatin-modifying complexes, contributing to the regulation of the levels of histone acetylation at actively transcribed genes. Competes with CHD4 and MBD3 for interaction with MTA1 to form a NuRD subcomplex, preventing the formation of full NuRD complex (containing CHD4 and MBD3), leading to recruitment of HDACs to gene promoters resulting in turn in the deacetylation of nearby H3K27 and H2A.Z. Plays a role in facilitating transcriptional elongation through regulation of histone acetylation. Negatively regulates brown adipocyte thermogenesis by interacting with and stabilizing HDAC1 at the UCP1 gene promoter, thereby promoting histone deacetylation at the promoter leading to the repression of UCP1 expression. This is PWWP domain-containing protein 2B (Pwwp2b) from Mus musculus (Mouse).